Consider the following 394-residue polypeptide: Protein TsgA homolog (394 aa).

The next 12 membrane-spanning stretches (helical) occupy residues W11–M31, F51–P71, L76–L96, I101–V121, L134–M154, W162–C182, V206–I226, Q246–L266, I274–N294, I302–L322, F334–V354, and L363–F383.

It belongs to the major facilitator superfamily. TsgA family.

Its subcellular location is the cell inner membrane. The sequence is that of Protein TsgA homolog from Yersinia pseudotuberculosis serotype O:1b (strain IP 31758).